A 95-amino-acid polypeptide reads, in one-letter code: MVRIRLTRMGKRKQPFYRIVVVDSRKRRDGAYIESLGYYNPLKEGEIKIDVERAVDWILKGAQPSDTVRDIFKKFGVMKRVHEIKYGKKEEATSE.

Belongs to the bacterial ribosomal protein bS16 family.

The sequence is that of Small ribosomal subunit protein bS16 from Thermotoga neapolitana (strain ATCC 49049 / DSM 4359 / NBRC 107923 / NS-E).